The following is a 1431-amino-acid chain: DNA polymerase II large subunit (1431 aa).

The interval 1388-1431 is disordered; it reads LLENFANGYNKGKKEEMPKKQRKKEQEKSKKRKVISLDDFFSRK. The span at 1399-1415 shows a compositional bias: basic and acidic residues; that stretch reads GKKEEMPKKQRKKEQEK.

This sequence belongs to the archaeal DNA polymerase II family. Heterodimer of a large subunit and a small subunit. This protein undergoes a protein self splicing that involves a post-translational excision of the intervening region (intein) followed by peptide ligation.

The catalysed reaction is DNA(n) + a 2'-deoxyribonucleoside 5'-triphosphate = DNA(n+1) + diphosphate. The enzyme catalyses Exonucleolytic cleavage in the 3'- to 5'-direction to yield nucleoside 5'-phosphates.. Functionally, possesses two activities: a DNA synthesis (polymerase) and an exonucleolytic activity that degrades single-stranded DNA in the 3'- to 5'-direction. Has a template-primer preference which is characteristic of a replicative DNA polymerase. The sequence is that of DNA polymerase II large subunit (polC) from Pyrococcus horikoshii (strain ATCC 700860 / DSM 12428 / JCM 9974 / NBRC 100139 / OT-3).